The sequence spans 290 residues: Putative beta-lactamase HcpC (290 aa).

The first 25 residues, 1–25 (MLENVKKSFFRVLCLGALCLGGLMA), serve as a signal peptide directing secretion. 7 TPR repeats span residues 29 to 62 (PKEL…KENS), 64 to 98 (CFNL…NYSN), 100 to 133 (CHLL…LKYA), 134 to 170 (EGCA…NDGD), 172 to 205 (CTIL…LKDS), 206 to 242 (PGCF…ENGG), and 244 to 278 (CFNL…GAKG). Intrachain disulfides connect cysteine 56–cysteine 64, cysteine 92–cysteine 100, cysteine 128–cysteine 136, cysteine 164–cysteine 172, cysteine 200–cysteine 208, cysteine 236–cysteine 244, and cysteine 272–cysteine 280.

Belongs to the hcp beta-lactamase family.

It localises to the secreted. It carries out the reaction a beta-lactam + H2O = a substituted beta-amino acid. Its function is as follows. May hydrolyze 6-aminopenicillinic acid and 7-aminocephalosporanic acid (ACA) derivatives. The sequence is that of Putative beta-lactamase HcpC (hcpC) from Helicobacter pylori (strain ATCC 700392 / 26695) (Campylobacter pylori).